The sequence spans 177 residues: MSRVGKMPIAVPKGVDVAINADQISVKGSLGTLVRPVNRLVSVKNEDGKLSFAPADESAAANAMSGTMRALVANMVNGVSKGFERKLTLVGVGFRAQAQGAKLNLQVGFSHPVVKDMPAGIKVECPTQTEIVIKGSDRQVVGQIAAEVRAIRPPEPYKGKGIRYAEEKVSLKETKKK.

The protein belongs to the universal ribosomal protein uL6 family. Part of the 50S ribosomal subunit.

This protein binds to the 23S rRNA, and is important in its secondary structure. It is located near the subunit interface in the base of the L7/L12 stalk, and near the tRNA binding site of the peptidyltransferase center. The sequence is that of Large ribosomal subunit protein uL6 from Methylibium petroleiphilum (strain ATCC BAA-1232 / LMG 22953 / PM1).